We begin with the raw amino-acid sequence, 944 residues long: Nonsense-mediated mRNA decay factor SMG8 (944 aa).

Disordered stretches follow at residues 559 to 601 (LNNG…SNCC) and 629 to 654 (ASSEQLLNSEQNTTSSGTSSADTDNE). Residues 568–589 (QDEDAEEDEAEEEEGQEQEQPT) are compositionally biased toward acidic residues. Positions 629–640 (ASSEQLLNSEQN) are enriched in polar residues. The segment covering 641-650 (TTSSGTSSAD) has biased composition (low complexity).

The protein belongs to the SMG8 family.

Involved in nonsense-mediated decay (NMD) of mRNAs containing premature stop codons. Probable component of kinase complex containing nonC and recruited to stalled ribosomes. This is Nonsense-mediated mRNA decay factor SMG8 from Drosophila melanogaster (Fruit fly).